Reading from the N-terminus, the 1726-residue chain is Protein NLRC5 (1726 aa).

One can recognise an NACHT domain in the interval 207-537 (RVVMLSGQAG…THLTIQEFMA (331 aa)). Residue 213–220 (GQAGSGKT) coordinates ATP. 18 LRR repeats span residues 879 to 902 (LTVL…EHLP), 904 to 925 (LDTI…VVLL), 1002 to 1025 (NLDF…LPNM), 1026 to 1048 (ASLN…LLVQ), 1103 to 1126 (CHHL…TFVQ), 1128 to 1155 (LPKL…LLSL), 1212 to 1235 (LNSV…YLIT), 1351 to 1374 (AEFL…SKGE), 1387 to 1411 (AQKH…VLGN), 1421 to 1443 (SLSL…RGLV), 1447 to 1468 (SLEE…CFAQ), 1502 to 1525 (LIEL…ELVK), 1532 to 1553 (RLRK…MLVK), 1560 to 1580 (ALQQ…AVLG), 1588 to 1609 (ELTE…SVCE), 1616 to 1637 (ALKK…ASCL), 1642 to 1662 (SIED…LKLA), and 1670 to 1691 (KLKR…ALAT).

Belongs to the NLRP family.

The protein localises to the cytoplasm. In terms of biological role, probable regulator of the NF-kappa-B and type I interferon signaling pathways. May also regulate the type II interferon signaling pathway. Plays a role in homeostatic control of innate immunity and in antiviral defense mechanisms. This is Protein NLRC5 (nlrc5) from Ictalurus punctatus (Channel catfish).